The chain runs to 679 residues: tRNA uridine 5-carboxymethylaminomethyl modification enzyme MnmG (679 aa).

An FAD-binding site is contributed by 13–18; it reads GGGHAG. 280-294 contributes to the NAD(+) binding site; sequence GPRYCPSVEDKINRF.

It belongs to the MnmG family. Homodimer. Heterotetramer of two MnmE and two MnmG subunits. The cofactor is FAD.

Its subcellular location is the cytoplasm. In terms of biological role, NAD-binding protein involved in the addition of a carboxymethylaminomethyl (cmnm) group at the wobble position (U34) of certain tRNAs, forming tRNA-cmnm(5)s(2)U34. In Albidiferax ferrireducens (strain ATCC BAA-621 / DSM 15236 / T118) (Rhodoferax ferrireducens), this protein is tRNA uridine 5-carboxymethylaminomethyl modification enzyme MnmG.